The chain runs to 807 residues: PGC-1 and ERR-induced regulator in muscle protein 1 (807 aa).

Disordered stretches follow at residues 29-80 (QADL…EDVA), 121-391 (CPGQ…TPAS), and 517-548 (PSHE…AGSR). Low complexity-rich tracts occupy residues 40 to 52 (SSDI…SGSS) and 145 to 160 (PAPS…PESP). A compositionally biased stretch (polar residues) spans 162 to 171 (HSDNPQSSPD). Over residues 180 to 194 (PGRKKRRAVGAKGTK) the composition is skewed to basic residues. 3 stretches are compositionally biased toward polar residues: residues 195–211 (HSGS…SPQL), 311–346 (KPQS…STPA), and 363–391 (ALST…TPAS). A Phosphoserine modification is found at S198. Residue T534 is modified to Phosphothreonine. Position 548 is an omega-N-methylarginine (R548).

As to expression, highly expressed in skeletal muscles and heart with lower levels in brown adipose tissue (at protein level). Muscle-specific expression is increased by endurance exercise.

It is found in the cytoplasm. The protein resides in the nucleus. In terms of biological role, regulates the expression of selective PPARGC1A/B and ESRRA/B/G target genes with roles in glucose and lipid metabolism, energy transfer, contractile function, muscle mitochondrial biogenesis and oxidative capacity. Required for the efficient induction of MT-CO2, MT-CO3, COX4I1, TFB1M, TFB2M, POLRMT and SIRT3 by PPARGC1A. Positively regulates the PPARGC1A/ESRRG-induced expression of CKMT2, TNNI3 and SLC2A4 and negatively regulates the PPARGC1A/ESRRG-induced expression of PDK4. In Mus musculus (Mouse), this protein is PGC-1 and ERR-induced regulator in muscle protein 1 (Perm1).